Reading from the N-terminus, the 154-residue chain is Prefoldin subunit 5 (154 aa).

Ala2 is subject to N-acetylalanine. Lys42 carries the N6-acetyllysine modification. A Phosphoserine modification is found at Ser56.

It belongs to the prefoldin subunit alpha family. As to quaternary structure, heterohexamer of two PFD-alpha type and four PFD-beta type subunits.

Its subcellular location is the nucleus. Its function is as follows. Binds specifically to cytosolic chaperonin (c-CPN) and transfers target proteins to it. Binds to nascent polypeptide chain and promotes folding in an environment in which there are many competing pathways for nonnative proteins. Represses the transcriptional activity of MYC. The sequence is that of Prefoldin subunit 5 (Pfdn5) from Mus musculus (Mouse).